The chain runs to 220 residues: Ribosome maturation factor RimP (220 aa).

Residues 173 to 220 (KKDKEERRQRKKARRRGEKGGVGDDGTAGEEQPDSAREGPARSASEGE) are disordered.

This sequence belongs to the RimP family.

It is found in the cytoplasm. In terms of biological role, required for maturation of 30S ribosomal subunits. The polypeptide is Ribosome maturation factor RimP (Chelativorans sp. (strain BNC1)).